The chain runs to 124 residues: Histone H2A (124 aa).

Positions 1–18 (MSGRGKGGKVKGKAKSRS) are enriched in basic residues. The interval 1-21 (MSGRGKGGKVKGKAKSRSNRA) is disordered. Ser2 carries the post-translational modification N-acetylserine. Ser2 carries the phosphoserine modification. N6-succinyllysine is present on Lys36. Position 104 is an N5-methylglutamine (Gln104). Lys119 is covalently cross-linked (Glycyl lysine isopeptide (Lys-Gly) (interchain with G-Cter in ubiquitin)). Phosphothreonine is present on Thr120.

This sequence belongs to the histone H2A family. As to quaternary structure, the nucleosome is a histone octamer containing two molecules each of H2A, H2B, H3 and H4 assembled in one H3-H4 heterotetramer and two H2A-H2B heterodimers. The octamer wraps approximately 147 bp of DNA. Post-translationally, the chromatin-associated form, but not the free cytoplasmic form, is phosphorylated on Thr-120 by NHK-1 during mitosis, and dephosphorylated during S-phase. Also phosphorylated on Thr-120 by NHK-1 during prophase I of meiosis; which is required for acetylation of H3 'Lys-14' and H4 'Lys-5', diassembly of the synaptonemal complex, and karyosome formation. Monoubiquitination of Lys-119 by sce/dRING gives a specific tag for epigenetic transcriptional repression. In terms of processing, phosphorylation on Ser-2 is enhanced during mitosis. Phosphorylation on Ser-2 directly represses transcription.

It localises to the nucleus. Its subcellular location is the chromosome. Core component of nucleosome. Nucleosomes wrap and compact DNA into chromatin, limiting DNA accessibility to the cellular machineries which require DNA as a template. Histones thereby play a central role in transcription regulation, DNA repair, DNA replication and chromosomal stability. DNA accessibility is regulated via a complex set of post-translational modifications of histones, also called histone code, and nucleosome remodeling. This Drosophila erecta (Fruit fly) protein is Histone H2A (His2A).